Reading from the N-terminus, the 906-residue chain is Protein kintoun (906 aa).

Phosphoserine is present on S376. Disordered stretches follow at residues 614–691 (QQQK…RKQR) and 793–906 (RKKN…DEDM). The segment covering 618-631 (KLNKKQRKRNKKQR) has biased composition (basic residues). Basic and acidic residues predominate over residues 639-655 (EELKAAQEELQLQHEKQ). Residues 793–808 (RKKNQKRRDCKLRAQQ) show a composition bias toward basic residues. S812 is modified (phosphoserine). Over residues 837–850 (ANAQYFKQPNNNNG) the composition is skewed to polar residues. Basic and acidic residues-rich tracts occupy residues 851-865 (HDQDKNKKLSMHDSG) and 875-887 (NNEEETKRNEADA). The span at 894 to 906 (EMDDDDEDEDEDM) shows a compositional bias: acidic residues.

This sequence belongs to the PIH1 family. Kintoun subfamily. In terms of assembly, interacts with Pp1alpha-96A, Pp1-87B, Pp1-13C and flw.

It is found in the cytoplasm. Its function is as follows. Required for cytoplasmic pre-assembly of axonemal dyneins, thereby playing a central role in motility in cilia and flagella. Involved in pre-assembly of dynein arm complexes in the cytoplasm before intraflagellar transport loads them for the ciliary compartment. This Drosophila virilis (Fruit fly) protein is Protein kintoun.